The chain runs to 353 residues: Photosystem II protein D1 (353 aa).

An N-acetylthreonine modification is found at threonine 2. Position 2 is a phosphothreonine (threonine 2). Transmembrane regions (helical) follow at residues 29 to 46 (YIGW…TATS), 118 to 133 (HFLL…EWEL), and 142 to 156 (WIAV…AATA). Histidine 118 provides a ligand contact to chlorophyll a. Tyrosine 126 provides a ligand contact to pheophytin a. Aspartate 170 and glutamate 189 together coordinate [CaMn4O5] cluster. The chain crosses the membrane as a helical span at residues 197-218 (FHMLGVAGVFGGSLFSAMHGSL). Histidine 198 contributes to the chlorophyll a binding site. Residues histidine 215 and 264–265 (SF) each bind a quinone. Histidine 215 lines the Fe cation pocket. Histidine 272 contributes to the Fe cation binding site. A helical membrane pass occupies residues 274-288 (FLAAWPVVGIWFTAL). Residues histidine 332, glutamate 333, aspartate 342, and alanine 344 each contribute to the [CaMn4O5] cluster site. Residues 345-353 (SVEAPSTNG) constitute a propeptide that is removed on maturation.

The protein belongs to the reaction center PufL/M/PsbA/D family. PSII is composed of 1 copy each of membrane proteins PsbA, PsbB, PsbC, PsbD, PsbE, PsbF, PsbH, PsbI, PsbJ, PsbK, PsbL, PsbM, PsbT, PsbX, PsbY, PsbZ, Psb30/Ycf12, at least 3 peripheral proteins of the oxygen-evolving complex and a large number of cofactors. It forms dimeric complexes. The cofactor is The D1/D2 heterodimer binds P680, chlorophylls that are the primary electron donor of PSII, and subsequent electron acceptors. It shares a non-heme iron and each subunit binds pheophytin, quinone, additional chlorophylls, carotenoids and lipids. D1 provides most of the ligands for the Mn4-Ca-O5 cluster of the oxygen-evolving complex (OEC). There is also a Cl(-1) ion associated with D1 and D2, which is required for oxygen evolution. The PSII complex binds additional chlorophylls, carotenoids and specific lipids.. Tyr-161 forms a radical intermediate that is referred to as redox-active TyrZ, YZ or Y-Z. In terms of processing, C-terminally processed by CTPA; processing is essential to allow assembly of the oxygen-evolving complex and thus photosynthetic growth.

It is found in the plastid. The protein resides in the chloroplast thylakoid membrane. The enzyme catalyses 2 a plastoquinone + 4 hnu + 2 H2O = 2 a plastoquinol + O2. Functionally, photosystem II (PSII) is a light-driven water:plastoquinone oxidoreductase that uses light energy to abstract electrons from H(2)O, generating O(2) and a proton gradient subsequently used for ATP formation. It consists of a core antenna complex that captures photons, and an electron transfer chain that converts photonic excitation into a charge separation. The D1/D2 (PsbA/PsbD) reaction center heterodimer binds P680, the primary electron donor of PSII as well as several subsequent electron acceptors. This chain is Photosystem II protein D1, found in Acorus calamus (Sweet flag).